Consider the following 218-residue polypeptide: Cytochrome b6 (218 aa).

The helical transmembrane segment at 35-55 threads the bilayer; it reads IFYCLGGITLVCFLIQFATGF. Heme c is bound at residue cysteine 38. Residues histidine 89 and histidine 103 each contribute to the heme b site. Helical transmembrane passes span 93–113, 119–139, and 189–209; these read ASMMVLMLILHVFRVYLTGGF, LTWVTGVTMAVITVSFGVTGY, and LHTFVMPWLLAVFMLMHFLMI. Positions 190 and 205 each coordinate heme b.

The protein belongs to the cytochrome b family. PetB subfamily. In terms of assembly, the 4 large subunits of the cytochrome b6-f complex are cytochrome b6, subunit IV (17 kDa polypeptide, PetD), cytochrome f and the Rieske protein, while the 4 small subunits are PetG, PetL, PetM and PetN. The complex functions as a dimer. Heme b serves as cofactor. The cofactor is heme c.

The protein resides in the cellular thylakoid membrane. Component of the cytochrome b6-f complex, which mediates electron transfer between photosystem II (PSII) and photosystem I (PSI), cyclic electron flow around PSI, and state transitions. This chain is Cytochrome b6, found in Synechococcus sp. (strain CC9902).